A 246-amino-acid chain; its full sequence is Pyrroloquinoline-quinone synthase (246 aa).

The protein belongs to the PqqC family.

It catalyses the reaction 6-(2-amino-2-carboxyethyl)-7,8-dioxo-1,2,3,4,7,8-hexahydroquinoline-2,4-dicarboxylate + 3 O2 = pyrroloquinoline quinone + 2 H2O2 + 2 H2O + H(+). The protein operates within cofactor biosynthesis; pyrroloquinoline quinone biosynthesis. Ring cyclization and eight-electron oxidation of 3a-(2-amino-2-carboxyethyl)-4,5-dioxo-4,5,6,7,8,9-hexahydroquinoline-7,9-dicarboxylic-acid to PQQ. The protein is Pyrroloquinoline-quinone synthase of Acidiphilium cryptum (strain JF-5).